The primary structure comprises 287 residues: ATP synthase gamma chain (287 aa).

The protein belongs to the ATPase gamma chain family. F-type ATPases have 2 components, CF(1) - the catalytic core - and CF(0) - the membrane proton channel. CF(1) has five subunits: alpha(3), beta(3), gamma(1), delta(1), epsilon(1). CF(0) has three main subunits: a, b and c. The F(1)F(0) complex interacts with SpoIIIJ and YqjG; YqgA is found in the same complex. Interacts with FloT.

Its subcellular location is the cell membrane. The protein localises to the membrane raft. Its function is as follows. Produces ATP from ADP in the presence of a proton gradient across the membrane. The gamma chain is believed to be important in regulating ATPase activity and the flow of protons through the CF(0) complex. This Bacillus subtilis (strain 168) protein is ATP synthase gamma chain.